The chain runs to 425 residues: Serine--tRNA ligase (425 aa).

Position 233-235 (233-235 (TAE)) interacts with L-serine. Position 264 to 266 (264 to 266 (RRE)) interacts with ATP. Position 287 (E287) interacts with L-serine. 351-354 (EISS) contacts ATP. S385 lines the L-serine pocket.

It belongs to the class-II aminoacyl-tRNA synthetase family. Type-1 seryl-tRNA synthetase subfamily. Homodimer. The tRNA molecule binds across the dimer.

Its subcellular location is the cytoplasm. The catalysed reaction is tRNA(Ser) + L-serine + ATP = L-seryl-tRNA(Ser) + AMP + diphosphate + H(+). It catalyses the reaction tRNA(Sec) + L-serine + ATP = L-seryl-tRNA(Sec) + AMP + diphosphate + H(+). Its pathway is aminoacyl-tRNA biosynthesis; selenocysteinyl-tRNA(Sec) biosynthesis; L-seryl-tRNA(Sec) from L-serine and tRNA(Sec): step 1/1. Functionally, catalyzes the attachment of serine to tRNA(Ser). Is also able to aminoacylate tRNA(Sec) with serine, to form the misacylated tRNA L-seryl-tRNA(Sec), which will be further converted into selenocysteinyl-tRNA(Sec). The sequence is that of Serine--tRNA ligase from Synechococcus sp. (strain CC9902).